Consider the following 96-residue polypeptide: Large ribosomal subunit protein uL23 (96 aa).

Belongs to the universal ribosomal protein uL23 family. As to quaternary structure, part of the 50S ribosomal subunit. Contacts protein L29, and trigger factor when it is bound to the ribosome.

In terms of biological role, one of the early assembly proteins it binds 23S rRNA. One of the proteins that surrounds the polypeptide exit tunnel on the outside of the ribosome. Forms the main docking site for trigger factor binding to the ribosome. This is Large ribosomal subunit protein uL23 from Caldicellulosiruptor saccharolyticus (strain ATCC 43494 / DSM 8903 / Tp8T 6331).